A 220-amino-acid chain; its full sequence is Fructose-6-phosphate aldolase (220 aa).

The Schiff-base intermediate with substrate role is filled by lysine 85.

The protein belongs to the transaldolase family. Type 3A subfamily. As to quaternary structure, homodecamer.

The protein resides in the cytoplasm. It catalyses the reaction beta-D-fructose 6-phosphate = dihydroxyacetone + D-glyceraldehyde 3-phosphate. Functionally, catalyzes the reversible formation of fructose 6-phosphate from dihydroxyacetone and D-glyceraldehyde 3-phosphate via an aldolization reaction. The sequence is that of Fructose-6-phosphate aldolase from Salmonella typhi.